Here is a 790-residue protein sequence, read N- to C-terminus: LPS-assembly protein LptD (790 aa).

Positions 1–20 (MRMLRWLILSAFSVAGAVQA) are cleaved as a signal peptide.

Belongs to the LptD family. As to quaternary structure, component of the lipopolysaccharide transport and assembly complex. Interacts with LptE and LptA.

The protein localises to the cell outer membrane. In terms of biological role, together with LptE, is involved in the assembly of lipopolysaccharide (LPS) at the surface of the outer membrane. The polypeptide is LPS-assembly protein LptD (Bordetella bronchiseptica (strain ATCC BAA-588 / NCTC 13252 / RB50) (Alcaligenes bronchisepticus)).